A 274-amino-acid chain; its full sequence is Ribosomal RNA small subunit methyltransferase A (274 aa).

Residues Asn28, Leu30, Gly55, Glu77, Asp103, and Asn122 each coordinate S-adenosyl-L-methionine.

The protein belongs to the class I-like SAM-binding methyltransferase superfamily. rRNA adenine N(6)-methyltransferase family. RsmA subfamily.

Its subcellular location is the cytoplasm. It catalyses the reaction adenosine(1518)/adenosine(1519) in 16S rRNA + 4 S-adenosyl-L-methionine = N(6)-dimethyladenosine(1518)/N(6)-dimethyladenosine(1519) in 16S rRNA + 4 S-adenosyl-L-homocysteine + 4 H(+). Specifically dimethylates two adjacent adenosines (A1518 and A1519) in the loop of a conserved hairpin near the 3'-end of 16S rRNA in the 30S particle. May play a critical role in biogenesis of 30S subunits. The sequence is that of Ribosomal RNA small subunit methyltransferase A from Sinorhizobium medicae (strain WSM419) (Ensifer medicae).